The following is a 609-amino-acid chain: UvrABC system protein C (609 aa).

The GIY-YIG domain maps to histidine 16 to isoleucine 94. In terms of domain architecture, UVR spans arginine 203–valine 238.

Belongs to the UvrC family. Interacts with UvrB in an incision complex.

The protein localises to the cytoplasm. In terms of biological role, the UvrABC repair system catalyzes the recognition and processing of DNA lesions. UvrC both incises the 5' and 3' sides of the lesion. The N-terminal half is responsible for the 3' incision and the C-terminal half is responsible for the 5' incision. This is UvrABC system protein C from Bordetella pertussis (strain Tohama I / ATCC BAA-589 / NCTC 13251).